Here is a 176-residue protein sequence, read N- to C-terminus: 3-hydroxyacyl-[acyl-carrier-protein] dehydratase FabZ (176 aa).

H54 is a catalytic residue.

It belongs to the thioester dehydratase family. FabZ subfamily.

The protein localises to the cytoplasm. It catalyses the reaction a (3R)-hydroxyacyl-[ACP] = a (2E)-enoyl-[ACP] + H2O. Involved in unsaturated fatty acids biosynthesis. Catalyzes the dehydration of short chain beta-hydroxyacyl-ACPs and long chain saturated and unsaturated beta-hydroxyacyl-ACPs. This is 3-hydroxyacyl-[acyl-carrier-protein] dehydratase FabZ from Yersinia pseudotuberculosis serotype O:1b (strain IP 31758).